The sequence spans 122 residues: Protein C10 (122 aa).

Belongs to the UPF0456 family.

The protein localises to the cytoplasm. The sequence is that of Protein C10 from Danio rerio (Zebrafish).